A 620-amino-acid polypeptide reads, in one-letter code: FAD-linked oxidoreductase notD (620 aa).

Residues 1-21 (MHYIRELLIVVFTSCPALSYA) form the signal peptide. Asn-50, Asn-86, and Asn-109 each carry an N-linked (GlcNAc...) asparagine glycan. Residues 124-313 (SQGRIPRYSA…TSVTMPVFGA (190 aa)) enclose the FAD-binding PCMH-type domain. Asn-403 carries an N-linked (GlcNAc...) asparagine glycan.

This sequence belongs to the oxygen-dependent FAD-linked oxidoreductase family. FAD is required as a cofactor.

Its pathway is alkaloid biosynthesis. In terms of biological role, FAD-linked oxidoreductase; part of the gene cluster that mediates the biosynthesis of notoamide, a fungal indole alkaloid that belongs to a family of natural products containing a characteristic bicyclo[2.2.2]diazaoctane core. The first step of notoamide biosynthesis involves coupling of L-proline and L-tryptophan by the bimodular NRPS notE, to produce cyclo-L-tryptophan-L-proline called brevianamide F. The reverse prenyltransferase notF then acts as a deoxybrevianamide E synthase and converts brevianamide F to deoxybrevianamide E via reverse prenylation at C-2 of the indole ring leading to the bicyclo[2.2.2]diazaoctane core. Deoxybrevianamide E is further hydroxylated at C-6 of the indole ring, likely catalyzed by the cytochrome P450 monooxygenase notG, to yield 6-hydroxy-deoxybrevianamide E. 6-hydroxy-deoxybrevianamide E is a specific substrate of the prenyltransferase notC for normal prenylation at C-7 to produce 6-hydroxy-7-prenyl-deoxybrevianamide, also called notoamide S. As the proposed pivotal branching point in notoamide biosynthesis, notoamide S can be diverted to notoamide E through an oxidative pyran ring closure putatively catalyzed by either notH cytochrome P450 monooxygenase or the notD FAD-linked oxidoreductase. This step would be followed by an indole 2,3-epoxidation-initiated pinacol-like rearrangement catalyzed by the notB FAD-dependent monooxygenase leading to the formation of notoamide C and notoamide D. On the other hand notoamide S is converted to notoamide T by notH (or notD), a bifunctional oxidase that also functions as the intramolecular Diels-Alderase responsible for generation of (+)-notoamide T. To generate antipodal (-)-notoaminide T, notH' (or notD') in Aspergillus versicolor is expected to catalyze a Diels-Alder reaction leading to the opposite stereochemistry. The remaining oxidoreductase notD (or notH) likely catalyzes the oxidative pyran ring formation to yield (+)-stephacidin A. The FAD-dependent monooxygenase notI is highly similar to notB and is predicted to catalyze a similar conversion from (+)-stephacidin A to (-)-notoamide B via the 2,3-epoxidation of (+)-stephacidin A followed by a pinacol-type rearrangement. Finally, it remains unclear which enzyme could be responsible for the final hydroxylation steps leading to notoamide A and sclerotiamide. In Aspergillus sp. (strain MF297-2), this protein is FAD-linked oxidoreductase notD.